Reading from the N-terminus, the 428-residue chain is 3-phosphoshikimate 1-carboxyvinyltransferase (428 aa).

3 residues coordinate 3-phosphoshikimate: K21, S22, and R26. K21 contributes to the phosphoenolpyruvate binding site. The phosphoenolpyruvate site is built by G91 and R119. Positions 164, 166, 313, and 340 each coordinate 3-phosphoshikimate. Residue Q166 coordinates phosphoenolpyruvate. D313 functions as the Proton acceptor in the catalytic mechanism. The phosphoenolpyruvate site is built by R344 and R386.

Belongs to the EPSP synthase family. As to quaternary structure, monomer.

It localises to the cytoplasm. It carries out the reaction 3-phosphoshikimate + phosphoenolpyruvate = 5-O-(1-carboxyvinyl)-3-phosphoshikimate + phosphate. The protein operates within metabolic intermediate biosynthesis; chorismate biosynthesis; chorismate from D-erythrose 4-phosphate and phosphoenolpyruvate: step 6/7. In terms of biological role, catalyzes the transfer of the enolpyruvyl moiety of phosphoenolpyruvate (PEP) to the 5-hydroxyl of shikimate-3-phosphate (S3P) to produce enolpyruvyl shikimate-3-phosphate and inorganic phosphate. The sequence is that of 3-phosphoshikimate 1-carboxyvinyltransferase from Campylobacter jejuni subsp. doylei (strain ATCC BAA-1458 / RM4099 / 269.97).